The chain runs to 77 residues: MKLTCVVIIAVLLLTACQLITADDSRGVQKHRSLRSTTKVSKSTSCMEAGSYCGSTTRICCGYCAYFGKKCIDYPSN.

The signal sequence occupies residues 1–22; the sequence is MKLTCVVIIAVLLLTACQLITA. A propeptide spanning residues 23–50 is cleaved from the precursor; sequence DDSRGVQKHRSLRSTTKVSKSTSCMEAG. 3 cysteine pairs are disulfide-bonded: C46/C61, C53/C64, and C60/C71.

Belongs to the conotoxin O1 superfamily. In terms of tissue distribution, expressed by the venom duct.

It localises to the secreted. Functionally, omega-conotoxins act at presynaptic membranes, they bind and block voltage-gated calcium channels (Cav). The polypeptide is Omega-conotoxin-like 6 (Conus striatus (Striated cone)).